Reading from the N-terminus, the 378-residue chain is Erythronate-4-phosphate dehydrogenase (378 aa).

Serine 45 and threonine 66 together coordinate substrate. Aspartate 146 and threonine 175 together coordinate NAD(+). The active site involves arginine 208. Position 232 (aspartate 232) interacts with NAD(+). Glutamate 237 is a catalytic residue. Histidine 254 acts as the Proton donor in catalysis. Glycine 257 contacts NAD(+). Tyrosine 258 contributes to the substrate binding site.

The protein belongs to the D-isomer specific 2-hydroxyacid dehydrogenase family. PdxB subfamily. In terms of assembly, homodimer.

The protein localises to the cytoplasm. It carries out the reaction 4-phospho-D-erythronate + NAD(+) = (R)-3-hydroxy-2-oxo-4-phosphooxybutanoate + NADH + H(+). Its pathway is cofactor biosynthesis; pyridoxine 5'-phosphate biosynthesis; pyridoxine 5'-phosphate from D-erythrose 4-phosphate: step 2/5. Catalyzes the oxidation of erythronate-4-phosphate to 3-hydroxy-2-oxo-4-phosphonooxybutanoate. The chain is Erythronate-4-phosphate dehydrogenase from Citrobacter koseri (strain ATCC BAA-895 / CDC 4225-83 / SGSC4696).